The primary structure comprises 353 residues: F-box protein At3g58530 (353 aa).

Residues Glu-8–Trp-56 enclose the F-box; degenerate domain.

The protein is F-box protein At3g58530 of Arabidopsis thaliana (Mouse-ear cress).